Reading from the N-terminus, the 329-residue chain is D-alanine--D-alanine ligase (329 aa).

The region spanning 120-326 (KLWLSAIGIP…FADYLEQILR (207 aa)) is the ATP-grasp domain. Residue 150–205 (ALAKWGKVFIKAASQGSSVGCYSASNEADLVKGIADAFGYSEQVLIEKAVKPRELE) coordinates ATP. Mg(2+) contacts are provided by Asp280, Glu293, and Asn295.

The protein belongs to the D-alanine--D-alanine ligase family. Requires Mg(2+) as cofactor. Mn(2+) is required as a cofactor.

It localises to the cytoplasm. The enzyme catalyses 2 D-alanine + ATP = D-alanyl-D-alanine + ADP + phosphate + H(+). It functions in the pathway cell wall biogenesis; peptidoglycan biosynthesis. Its function is as follows. Cell wall formation. This chain is D-alanine--D-alanine ligase, found in Aeromonas hydrophila subsp. hydrophila (strain ATCC 7966 / DSM 30187 / BCRC 13018 / CCUG 14551 / JCM 1027 / KCTC 2358 / NCIMB 9240 / NCTC 8049).